We begin with the raw amino-acid sequence, 305 residues long: tRNA pseudouridine synthase B (305 aa).

Residue aspartate 48 is the Nucleophile of the active site.

This sequence belongs to the pseudouridine synthase TruB family. Type 1 subfamily.

It catalyses the reaction uridine(55) in tRNA = pseudouridine(55) in tRNA. Functionally, responsible for synthesis of pseudouridine from uracil-55 in the psi GC loop of transfer RNAs. This Pseudomonas putida (strain GB-1) protein is tRNA pseudouridine synthase B.